The sequence spans 543 residues: Mannuronan C5-epimerase (543 aa).

The signal sequence occupies residues 1–35 (MPDISLSIPRRRLPRLRPLAAAVLGAVLLHGQAWA). PbH1 repeat units follow at residues 243–270 (GAEV…SISQ), 283–304 (RPKG…YCYE), 305–327 (ADDL…DPHD), 329–352 (SHRL…IVSR), 354–376 (VNDS…VLDR), 378–400 (SEGN…TLYE), and 401–423 (SGDN…RVRN). The active-site Proton acceptor is the His-326.

It belongs to the D-mannuronate C5-epimerase family.

The protein resides in the periplasm. The enzyme catalyses [(1-&gt;4)-beta-D-mannuronosyl](n) = [alginate](n). The protein operates within glycan biosynthesis; alginate biosynthesis. With respect to regulation, inhibited by the presence of acetyl groups on the substrate. Functionally, catalyzes the epimerization of beta-D-mannuronate to alpha-L-guluronate during the synthesis of the linear polysaccharide alginate. In addition, is part of a periplasmic protein complex that protects alginate from degradation by AlgL by channeling the newly formed alginate polymer through a scaffold that transfers the alginate polymer through the periplasmic space to the outer membrane secretin AlgE. In Pseudomonas aeruginosa (strain ATCC 15692 / DSM 22644 / CIP 104116 / JCM 14847 / LMG 12228 / 1C / PRS 101 / PAO1), this protein is Mannuronan C5-epimerase.